The sequence spans 647 residues: Paraneoplastic antigen Ma6E (647 aa).

Disordered stretches follow at residues 111-199, 227-254, 508-580, and 608-647; these read QPQG…AGGA, GAAG…RAAG, AAAP…VPWG, and RGQE…SQGK. 3 stretches are compositionally biased toward gly residues: residues 122-149, 158-199, and 227-251; these read GEGG…GEAG, GEAG…AGGA, and GAAG…GEGR. Residues 517 to 570 show a composition bias toward low complexity; that stretch reads PAAAQASPAQGNASEAGPGAEDAAEAASATKEAARGAPAAGEGESAPAGPEGLG. Residues 625–636 show a composition bias toward acidic residues; it reads EEPENEDEDGAG.

This Homo sapiens (Human) protein is Paraneoplastic antigen Ma6E.